The primary structure comprises 129 residues: Small ribosomal subunit protein uS11 (129 aa).

Belongs to the universal ribosomal protein uS11 family. As to quaternary structure, part of the 30S ribosomal subunit. Interacts with proteins S7 and S18. Binds to IF-3.

Located on the platform of the 30S subunit, it bridges several disparate RNA helices of the 16S rRNA. Forms part of the Shine-Dalgarno cleft in the 70S ribosome. This chain is Small ribosomal subunit protein uS11, found in Vibrio atlanticus (strain LGP32) (Vibrio splendidus (strain Mel32)).